The primary structure comprises 104 residues: L-rhamnose mutarotase (104 aa).

Tyrosine 18 lines the substrate pocket. Residue histidine 22 is the Proton donor of the active site. Residues tyrosine 41 and 76–77 (WW) contribute to the substrate site.

It belongs to the rhamnose mutarotase family. As to quaternary structure, homodimer.

The protein resides in the cytoplasm. The catalysed reaction is alpha-L-rhamnose = beta-L-rhamnose. The protein operates within carbohydrate metabolism; L-rhamnose metabolism. Functionally, involved in the anomeric conversion of L-rhamnose. This is L-rhamnose mutarotase from Phocaeicola vulgatus (strain ATCC 8482 / DSM 1447 / JCM 5826 / CCUG 4940 / NBRC 14291 / NCTC 11154) (Bacteroides vulgatus).